Here is a 476-residue protein sequence, read N- to C-terminus: Glycogen synthase (476 aa).

Lys15 contacts ADP-alpha-D-glucose.

This sequence belongs to the glycosyltransferase 1 family. Bacterial/plant glycogen synthase subfamily.

The enzyme catalyses [(1-&gt;4)-alpha-D-glucosyl](n) + ADP-alpha-D-glucose = [(1-&gt;4)-alpha-D-glucosyl](n+1) + ADP + H(+). Its pathway is glycan biosynthesis; glycogen biosynthesis. Its function is as follows. Synthesizes alpha-1,4-glucan chains using ADP-glucose. The protein is Glycogen synthase of Streptococcus sanguinis (strain SK36).